The primary structure comprises 559 residues: Myb/SANT-like DNA-binding domain-containing protein 2 (559 aa).

Positions 1–62 (MAAPCGSELP…GSAAGSGAAA (62 aa)) are disordered. Residues Ser-13, Ser-24, Ser-27, Ser-32, and Ser-48 each carry the phosphoserine modification. Low complexity predominate over residues 46-61 (GASPLGPGSAAGSGAA). In terms of domain architecture, Myb-like spans 103–173 (SWTPAETNAL…QCRERIKTLR (71 aa)). Residues Lys-268 and Lys-343 each participate in a glycyl lysine isopeptide (Lys-Gly) (interchain with G-Cter in SUMO2) cross-link. Residue Ser-436 is modified to Phosphoserine.

The protein is Myb/SANT-like DNA-binding domain-containing protein 2 (Msantd2) of Mus musculus (Mouse).